A 2492-amino-acid chain; its full sequence is Talin-A (2492 aa).

The region spanning 84-365 is the FERM domain; it reads RPQKFKLLDG…GYIEIIMKAR (282 aa). The 243-residue stretch at 2250-2492 folds into the I/LWEQ domain; that stretch reads EEDNVLEDLE…NSRKQNYNKN (243 aa).

The protein localises to the cytoplasm. It is found in the cytoskeleton. It localises to the cell cortex. In terms of biological role, actin-binding protein that may be involved in the control of cell motility and chemotaxis. This is Talin-A (talA) from Dictyostelium discoideum (Social amoeba).